The chain runs to 405 residues: 4-hydroxy-3-methylbut-2-en-1-yl diphosphate synthase (flavodoxin) (405 aa).

Cysteine 297, cysteine 300, cysteine 343, and glutamate 350 together coordinate [4Fe-4S] cluster.

This sequence belongs to the IspG family. Requires [4Fe-4S] cluster as cofactor.

The catalysed reaction is (2E)-4-hydroxy-3-methylbut-2-enyl diphosphate + oxidized [flavodoxin] + H2O + 2 H(+) = 2-C-methyl-D-erythritol 2,4-cyclic diphosphate + reduced [flavodoxin]. It participates in isoprenoid biosynthesis; isopentenyl diphosphate biosynthesis via DXP pathway; isopentenyl diphosphate from 1-deoxy-D-xylulose 5-phosphate: step 5/6. Functionally, converts 2C-methyl-D-erythritol 2,4-cyclodiphosphate (ME-2,4cPP) into 1-hydroxy-2-methyl-2-(E)-butenyl 4-diphosphate. The chain is 4-hydroxy-3-methylbut-2-en-1-yl diphosphate synthase (flavodoxin) from Francisella tularensis subsp. novicida (strain U112).